The primary structure comprises 609 residues: MPNYIFWPYESLFENSAAQGPQVALAISFEKTHFVVLGVCEPQYLEEVSIRPPYSVVATKNNGAEGWNYKVADPCNVHFRIPKLKFMQFYSSDPISLIIPEKEVGLHSSVGETLNYSKLEQHPRYKRDNKKLSETLNIINLFPAYCKALNELYPFIQTSQENLRGTMLNSVAAWCSSTCIYKMVAKIGFYLTFVICSIASLVSSLLNYSHFQLVNYSAFVQQIDLRCQQICYFPVQYERINKKDNIQNVGSMVEKDNSNSQFSHSYMPSKFYPDYILLYNTIWLIINDISFGLILGAILIENRDFLVSASHRVLKFFLYDSLKTITETLANNPLGIKLNAELANFLSELFLWVIEFSYTTFIKRLIDPKTLSSLLTLTIYMMFLVGFSFAVSLAIDFFAILSFPIYVFYRISSKLYHCQLNIMASLFNLFCGKKRNVLRNRIDHNYFQLDQLLLGTLLFIILVFLTPTVMAFYMSYTVLRMLTITIEIFSEAVIALINHFPLFALLLRLKDPKRLPGGISIELKTTVSNKHTTLELQNNPIKFKSMFRPYNLLLSQMRTNYFSFATVRKIVRGESIMVNRNKLYYVLYSSLPSKPLSVKDLYKRLTIQA.

Topologically, residues 1 to 186 (MPNYIFWPYE…STCIYKMVAK (186 aa)) are extracellular. Residues 187–207 (IGFYLTFVICSIASLVSSLLN) form a helical membrane-spanning segment. At 208 to 280 (YSHFQLVNYS…FYPDYILLYN (73 aa)) the chain is on the cytoplasmic side. The chain crosses the membrane as a helical span at residues 281 to 301 (TIWLIINDISFGLILGAILIE). Over 302–380 (NRDFLVSASH…LSSLLTLTIY (79 aa)) the chain is Extracellular. Residues 381 to 401 (MMFLVGFSFAVSLAIDFFAIL) form a helical membrane-spanning segment. Residues 402-451 (SFPIYVFYRISSKLYHCQLNIMASLFNLFCGKKRNVLRNRIDHNYFQLDQ) are Cytoplasmic-facing. Residues 452-472 (LLLGTLLFIILVFLTPTVMAF) traverse the membrane as a helical segment. Topologically, residues 473–485 (YMSYTVLRMLTIT) are extracellular. A helical transmembrane segment spans residues 486–506 (IEIFSEAVIALINHFPLFALL). Residues 507-609 (LRLKDPKRLP…DLYKRLTIQA (103 aa)) lie on the Cytoplasmic side of the membrane.

It belongs to the PIGQ family. As to quaternary structure, component of the phosphatidylinositol N-acetylglucosaminyltransferase (GPI-GlcNAc transferase) complex composed of at least GPI1, GPI2, GPI3, GPI15, GPI19 and ERI1.

The protein resides in the membrane. The enzyme catalyses a 1,2-diacyl-sn-glycero-3-phospho-(1D-myo-inositol) + UDP-N-acetyl-alpha-D-glucosamine = a 6-(N-acetyl-alpha-D-glucosaminyl)-1-(1,2-diacyl-sn-glycero-3-phospho)-1D-myo-inositol + UDP + H(+). It participates in glycolipid biosynthesis; glycosylphosphatidylinositol-anchor biosynthesis. In terms of biological role, part of the complex catalyzing the transfer of N-acetylglucosamine from UDP-N-acetylglucosamine to phosphatidylinositol, the first step of GPI biosynthesis. This is Phosphatidylinositol N-acetylglucosaminyltransferase subunit GPI1 (GPI1) from Saccharomyces cerevisiae (strain ATCC 204508 / S288c) (Baker's yeast).